A 493-amino-acid polypeptide reads, in one-letter code: Glutamyl-tRNA(Gln) amidotransferase subunit A (493 aa).

Active-site charge relay system residues include Lys-78 and Ser-158. The active-site Acyl-ester intermediate is Ser-182.

It belongs to the amidase family. GatA subfamily. In terms of assembly, heterotrimer of A, B and C subunits.

It carries out the reaction L-glutamyl-tRNA(Gln) + L-glutamine + ATP + H2O = L-glutaminyl-tRNA(Gln) + L-glutamate + ADP + phosphate + H(+). In terms of biological role, allows the formation of correctly charged Gln-tRNA(Gln) through the transamidation of misacylated Glu-tRNA(Gln) in organisms which lack glutaminyl-tRNA synthetase. The reaction takes place in the presence of glutamine and ATP through an activated gamma-phospho-Glu-tRNA(Gln). This Rickettsia canadensis (strain McKiel) protein is Glutamyl-tRNA(Gln) amidotransferase subunit A.